A 158-amino-acid chain; its full sequence is UPF0262 protein Rsph17029_2283 (158 aa).

It belongs to the UPF0262 family.

The protein is UPF0262 protein Rsph17029_2283 of Cereibacter sphaeroides (strain ATCC 17029 / ATH 2.4.9) (Rhodobacter sphaeroides).